The following is a 315-amino-acid chain: ATP synthase gamma chain (315 aa).

This sequence belongs to the ATPase gamma chain family. In terms of assembly, F-type ATPases have 2 components, CF(1) - the catalytic core - and CF(0) - the membrane proton channel. CF(1) has five subunits: alpha(3), beta(3), gamma(1), delta(1), epsilon(1). CF(0) has three main subunits: a, b and c.

The protein localises to the cellular thylakoid membrane. Produces ATP from ADP in the presence of a proton gradient across the membrane. The gamma chain is believed to be important in regulating ATPase activity and the flow of protons through the CF(0) complex. This chain is ATP synthase gamma chain, found in Microcystis aeruginosa (strain NIES-843 / IAM M-2473).